We begin with the raw amino-acid sequence, 295 residues long: Nucleotide-binding protein RD1_1380 (295 aa).

Position 16–23 (16–23) interacts with ATP; it reads GPSGAGRS. 63 to 66 lines the GTP pocket; the sequence is DPRN.

The protein belongs to the RapZ-like family.

Displays ATPase and GTPase activities. This chain is Nucleotide-binding protein RD1_1380, found in Roseobacter denitrificans (strain ATCC 33942 / OCh 114) (Erythrobacter sp. (strain OCh 114)).